Here is a 243-residue protein sequence, read N- to C-terminus: 1-(5-phosphoribosyl)-5-[(5-phosphoribosylamino)methylideneamino] imidazole-4-carboxamide isomerase (243 aa).

Catalysis depends on Asp-8, which acts as the Proton acceptor. The active-site Proton donor is Asp-129.

The protein belongs to the HisA/HisF family.

It is found in the cytoplasm. The enzyme catalyses 1-(5-phospho-beta-D-ribosyl)-5-[(5-phospho-beta-D-ribosylamino)methylideneamino]imidazole-4-carboxamide = 5-[(5-phospho-1-deoxy-D-ribulos-1-ylimino)methylamino]-1-(5-phospho-beta-D-ribosyl)imidazole-4-carboxamide. It functions in the pathway amino-acid biosynthesis; L-histidine biosynthesis; L-histidine from 5-phospho-alpha-D-ribose 1-diphosphate: step 4/9. This chain is 1-(5-phosphoribosyl)-5-[(5-phosphoribosylamino)methylideneamino] imidazole-4-carboxamide isomerase, found in Syntrophotalea carbinolica (strain DSM 2380 / NBRC 103641 / GraBd1) (Pelobacter carbinolicus).